Here is a 324-residue protein sequence, read N- to C-terminus: MEGRDMLSWEQKTLLSELINGFDAAKKLQARLREAPSPSSSFSSPATAVAETNEILVKQIVSSYERSLLLLNWSSSPSVQLIPTPVTVVPVANPGSVPESPASINGSPRSEEFADGGGSSESHHRQDYIFNSKKRKMLPKWSEKVRISPERGLEGPQDDVFSWRKYGQKDILGAKFPRSYYRCTHRSTQNCWATKQVQRSDGDATVFEVTYRGTHTCSQAITRTPPLASPEKRQDTRVKPAITQKPKDILESLKSNLTVRTDGLDDGKDVFSFPDTPPFYNYGTINGEFGHVESSPIFDVVDWFNPTVEIDTTFPAFLHESIYY.

Residues 93–126 form a disordered region; the sequence is NPGSVPESPASINGSPRSEEFADGGGSSESHHRQ. Positions 152 to 220 form a DNA-binding region, WRKY; the sequence is GLEGPQDDVF…YRGTHTCSQA (69 aa).

It belongs to the WRKY group III family. As to quaternary structure, interacts with ESR/ESP and UPL5. Binds to WRKY30. Post-translationally, ubiquitinated by UPL5. Ubiquitination leads to its subsequent degradation, thus controlling the timing of leaf senescence.

The protein localises to the nucleus. Transcription factor. Interacts specifically with the W box (5'-(T)TGAC[CT]-3'), a frequently occurring elicitor-responsive cis-acting element. May regulate the early events of leaf senescence. Negatively regulates the expression of ESR/ESP. Together with WRKY46 and WRKY70, promotes resistance to P.syringae, probably by enhancing salicylic acid (SA)- dependent genes. Contributes to the suppression of jasmonic acid (MeJA)-induced expression of PDF1.2. In Arabidopsis thaliana (Mouse-ear cress), this protein is Probable WRKY transcription factor 53.